We begin with the raw amino-acid sequence, 384 residues long: Geranylgeranyl pyrophosphate synthase (384 aa).

Disordered stretches follow at residues 1–25 (MVPNANSNTVSLQSPNAIPPRTSST) and 39–78 (RPVPESDWLGQNNTRNRSSSTTAIPLTGMHATGPQDPARY). Residues 47-62 (LGQNNTRNRSSSTTAI) show a composition bias toward polar residues. 3 residues coordinate isopentenyl diphosphate: Lys-112, Arg-115, and His-144. Mg(2+)-binding residues include Asp-151 and Asp-155. Arg-160 is a binding site for dimethylallyl diphosphate. Arg-161 contacts isopentenyl diphosphate. Dimethylallyl diphosphate is bound by residues Lys-238, Thr-239, and Gln-272. Residue Asp-275 coordinates Mg(2+). Residues Asn-279, Lys-289, and Lys-299 each coordinate dimethylallyl diphosphate.

The protein belongs to the FPP/GGPP synthase family. Requires Mg(2+) as cofactor.

It catalyses the reaction isopentenyl diphosphate + dimethylallyl diphosphate = (2E)-geranyl diphosphate + diphosphate. The enzyme catalyses isopentenyl diphosphate + (2E)-geranyl diphosphate = (2E,6E)-farnesyl diphosphate + diphosphate. It carries out the reaction isopentenyl diphosphate + (2E,6E)-farnesyl diphosphate = (2E,6E,10E)-geranylgeranyl diphosphate + diphosphate. The protein operates within secondary metabolite biosynthesis. In terms of biological role, catalyzes the trans-addition of the 3 molecules of isopentenyl diphosphate (IPP) onto dimethylallyl diphosphate (DMAPP) to form geranylgeranyl pyrophosphate (GGPP). GGPP is a precursor for the biosynthesis of many secondary metabolites, including the indole diterpenes nodulisporic acids (NA). In Hypoxylon pulicicidum, this protein is Geranylgeranyl pyrophosphate synthase.